The chain runs to 394 residues: Methane monooxygenase component A beta chain (394 aa).

In terms of assembly, m.trichosporium has two forms of methane monooxygenase, a soluble and a membrane-bound type. The soluble type consists of four components (A to D): protein A, comprising three chains, in an alpha-2, beta-2, gamma-2 configuration, is a nonheme iron protein containing an unusual mu-hydroxo bridge structure at its active site and interacts with both oxygen and methane.

The catalysed reaction is methane + NADH + O2 + H(+) = methanol + NAD(+) + H2O. The enzyme catalyses methane + NADPH + O2 + H(+) = methanol + NADP(+) + H2O. Its function is as follows. Responsible for the initial oxygenation of methane to methanol in methanotrophs. It also catalyzes the monohydroxylation of a variety of unactivated alkenes, alicyclic, aromatic and heterocyclic compounds. The chain is Methane monooxygenase component A beta chain (mmoY) from Methylosinus trichosporium.